The chain runs to 56 residues: Aspartyl-phosphate phosphatase YisI (56 aa).

This sequence belongs to the spo0E family.

Functionally, aspartyl-phosphate phosphatase which specifically dephosphorylates the sporulation transcription factor Spo0A-P and negatively regulates the sporulation initiation pathway in order to control the proper timing of sporulation. In Bacillus subtilis (strain 168), this protein is Aspartyl-phosphate phosphatase YisI (yisI).